The primary structure comprises 1207 residues: DNA-directed RNA polymerase subunit beta' (1207 aa).

Zn(2+)-binding residues include C60, C62, C75, and C78. Mg(2+) contacts are provided by D450, D452, and D454. 4 residues coordinate Zn(2+): C818, C892, C899, and C902.

The protein belongs to the RNA polymerase beta' chain family. As to quaternary structure, the RNAP catalytic core consists of 2 alpha, 1 beta, 1 beta' and 1 omega subunit. When a sigma factor is associated with the core the holoenzyme is formed, which can initiate transcription. Mg(2+) is required as a cofactor. The cofactor is Zn(2+).

The enzyme catalyses RNA(n) + a ribonucleoside 5'-triphosphate = RNA(n+1) + diphosphate. DNA-dependent RNA polymerase catalyzes the transcription of DNA into RNA using the four ribonucleoside triphosphates as substrates. The protein is DNA-directed RNA polymerase subunit beta' of Lactococcus lactis subsp. cremoris (strain MG1363).